Here is a 92-residue protein sequence, read N- to C-terminus: Elongation factor 1-beta (92 aa).

It belongs to the EF-1-beta/EF-1-delta family.

Promotes the exchange of GDP for GTP in EF-1-alpha/GDP, thus allowing the regeneration of EF-1-alpha/GTP that could then be used to form the ternary complex EF-1-alpha/GTP/AAtRNA. The protein is Elongation factor 1-beta of Hyperthermus butylicus (strain DSM 5456 / JCM 9403 / PLM1-5).